The chain runs to 243 residues: tRNA (guanine-N(1)-)-methyltransferase (243 aa).

Residues glycine 123 and 143 to 148 (LGDFVM) each bind S-adenosyl-L-methionine.

This sequence belongs to the RNA methyltransferase TrmD family. In terms of assembly, homodimer.

Its subcellular location is the cytoplasm. The catalysed reaction is guanosine(37) in tRNA + S-adenosyl-L-methionine = N(1)-methylguanosine(37) in tRNA + S-adenosyl-L-homocysteine + H(+). Its function is as follows. Specifically methylates guanosine-37 in various tRNAs. The chain is tRNA (guanine-N(1)-)-methyltransferase from Ruegeria pomeroyi (strain ATCC 700808 / DSM 15171 / DSS-3) (Silicibacter pomeroyi).